The following is a 331-amino-acid chain: Quinone oxidoreductase (331 aa).

Residue Ala-2 is modified to N-acetylalanine. Lys-23 carries the post-translational modification N6-acetyllysine. Residue Ser-35 is modified to Phosphoserine. Residues Tyr-53, 158 to 161 (SGGV), and Gly-181 each bind NADP(+). The residue at position 186 (Lys-186) is an N6-acetyllysine. Residues His-200, Asn-231, 248–251 (VGCR), and 271–273 (VSL) each bind NADP(+). At Lys-298 the chain carries N6-succinyllysine.

The protein belongs to the zinc-containing alcohol dehydrogenase family. Quinone oxidoreductase subfamily. As to quaternary structure, homotetramer.

The protein resides in the cytoplasm. It carries out the reaction 2 a quinone + NADPH + H(+) = 2 a 1,4-benzosemiquinone + NADP(+). Functionally, does not have alcohol dehydrogenase activity. Binds NADP and acts through a one-electron transfer process. Orthoquinones, such as 1,2-naphthoquinone or 9,10-phenanthrenequinone, are the best substrates (in vitro). May act in the detoxification of xenobiotics. Interacts with (AU)-rich elements (ARE) in the 3'-UTR of target mRNA species and enhances their stability. NADPH binding interferes with mRNA binding. The polypeptide is Quinone oxidoreductase (Cryz) (Mus musculus (Mouse)).